Here is an 890-residue protein sequence, read N- to C-terminus: Alanine--tRNA ligase (890 aa).

Residues His568, His572, Cys680, and His684 each contribute to the Zn(2+) site.

It belongs to the class-II aminoacyl-tRNA synthetase family. Zn(2+) serves as cofactor.

It localises to the cytoplasm. It carries out the reaction tRNA(Ala) + L-alanine + ATP = L-alanyl-tRNA(Ala) + AMP + diphosphate. In terms of biological role, catalyzes the attachment of alanine to tRNA(Ala) in a two-step reaction: alanine is first activated by ATP to form Ala-AMP and then transferred to the acceptor end of tRNA(Ala). Also edits incorrectly charged Ser-tRNA(Ala) and Gly-tRNA(Ala) via its editing domain. The protein is Alanine--tRNA ligase of Psychrobacter cryohalolentis (strain ATCC BAA-1226 / DSM 17306 / VKM B-2378 / K5).